A 245-amino-acid polypeptide reads, in one-letter code: Demethylmenaquinone methyltransferase (245 aa).

Residues T58, D79, and 106–107 contribute to the S-adenosyl-L-methionine site; that span reads NA.

Belongs to the class I-like SAM-binding methyltransferase superfamily. MenG/UbiE family.

The catalysed reaction is a 2-demethylmenaquinol + S-adenosyl-L-methionine = a menaquinol + S-adenosyl-L-homocysteine + H(+). It participates in quinol/quinone metabolism; menaquinone biosynthesis; menaquinol from 1,4-dihydroxy-2-naphthoate: step 2/2. Functionally, methyltransferase required for the conversion of demethylmenaquinol (DMKH2) to menaquinol (MKH2). The sequence is that of Demethylmenaquinone methyltransferase from Halalkalibacterium halodurans (strain ATCC BAA-125 / DSM 18197 / FERM 7344 / JCM 9153 / C-125) (Bacillus halodurans).